We begin with the raw amino-acid sequence, 135 residues long: UPF0355 protein MRSA252 (135 aa).

The protein belongs to the UPF0355 family.

The polypeptide is UPF0355 protein MRSA252 (Staphylococcus aureus (strain MRSA252)).